A 213-amino-acid chain; its full sequence is Uracil phosphoribosyltransferase (213 aa).

Residues arginine 78, arginine 103, and 131 to 139 contribute to the 5-phospho-alpha-D-ribose 1-diphosphate site; that span reads DPMLATGGT. Uracil-binding positions include isoleucine 197 and 202-204; that span reads GDA. 5-phospho-alpha-D-ribose 1-diphosphate is bound at residue aspartate 203.

Belongs to the UPRTase family. The cofactor is Mg(2+).

The catalysed reaction is UMP + diphosphate = 5-phospho-alpha-D-ribose 1-diphosphate + uracil. It participates in pyrimidine metabolism; UMP biosynthesis via salvage pathway; UMP from uracil: step 1/1. With respect to regulation, allosterically activated by GTP. Its function is as follows. Catalyzes the conversion of uracil and 5-phospho-alpha-D-ribose 1-diphosphate (PRPP) to UMP and diphosphate. This chain is Uracil phosphoribosyltransferase, found in Bifidobacterium adolescentis (strain ATCC 15703 / DSM 20083 / NCTC 11814 / E194a).